The sequence spans 475 residues: Retrotransposon Gag-like protein 3 (475 aa).

Basic and acidic residues-rich tracts occupy residues L51–E66 and K78–K87. Disordered regions lie at residues L51–A101, E152–Y173, and D397–P421. The CCHC-type zinc finger occupies R443 to P462.

It localises to the nucleus. In terms of biological role, may function as a transcriptional regulator. Plays a role in postnatal myogenesis, may be involved in the regulation of satellite cells self-renewal. In Homo sapiens (Human), this protein is Retrotransposon Gag-like protein 3.